Consider the following 253-residue polypeptide: CD151 antigen (253 aa).

Over 1–18 the chain is Cytoplasmic; sequence MGEFNEKKATCGTVCLKY. S-palmitoyl cysteine attachment occurs at residues Cys11 and Cys15. The chain crosses the membrane as a helical span at residues 19 to 39; it reads LLFTYNCCFWLAGLAVMAVGI. The Extracellular segment spans residues 40 to 57; the sequence is WTLALKSDYISLLASSTY. The helical transmembrane segment at 58 to 78 threads the bilayer; the sequence is LATAYILVVAGVVVMVTGVLG. Residues 79–91 lie on the Cytoplasmic side of the membrane; sequence CCATFKERRNLLR. Residues 92-112 form a helical membrane-spanning segment; the sequence is LYFILLLIIFLLEIIAGILAY. Topologically, residues 113–221 are extracellular; the sequence is VYYQQLNTEL…LETFIQEHLR (109 aa). Asn159 carries an N-linked (GlcNAc...) asparagine glycan. Residues 222–242 traverse the membrane as a helical segment; that stretch reads VIGAVGIGIACVQVFGMIFTC. S-palmitoyl cysteine attachment occurs at residues Cys242 and Cys243. At 243–253 the chain is on the cytoplasmic side; sequence CLYRSLKLEHY.

Belongs to the tetraspanin (TM4SF) family. As to quaternary structure, interacts with integrins ITGA3:ITGB1, ITGA5:ITGB1, ITGA3:ITGB1 and ITGA6:ITGB4 and with CD9 and CD181. Interacts (via the second extracellular domain) with integrin ITGAV:ITGB3. Interacts with ITGA3; this interaction modulates ITGA3 glycosylation pattern. Interacts with F11R. Interacts with RAC1 and CDC42; these interactions mediate physical association of RAC1 and CDC42 with integrin adhesion receptor complexes. Post-translationally, palmitoylated. Palmitoylation by ZDHHC2 regulates CD151 expression, association with other tetraspanin family proteins and function in cell adhesion. Ubiquitinated by RNF128 on lysine residues present in the tetraspanin amino terminus via 'Lys-48'-linked ubiquitin leading to proteasomal degradation.

It is found in the cell membrane. Structural component of specialized membrane microdomains known as tetraspanin-enriched microdomains (TERMs), which act as platforms for receptor clustering and signaling. Plays a role in various cellular and molecular mechanism through its association with both integrin and non-integrin proteins. These interactions facilitate critical cellular functions, including cell-to-cell communication, wound healing, platelet aggregation, trafficking, cell motility, and angiogenesis. Via interaction with JAM-A/F11R and integrin ITGA3:ITGB1, promotes the recruitment of signaling molecules such as RAC1, CDC42 and RhoGTPases to facilitate the polarization of epithelial cells and the reorganization of the actin cytoskeleton, which are critical steps in cell migration process. Regulates the glycosylation pattern of ITGA3:ITGB1 thereby modulating its activity. Plays an essential role in the maintenance of central laminin-binding integrin ITGA6:ITGB4-containing adhesion complexes. Essential for the proper assembly of the glomerular and tubular basement membranes in kidney. Contributes to T-cell activation by modulating integrin signaling leading to activation of downstream targets PTK2 and MAPK1/MAPK3. The polypeptide is CD151 antigen (Cd151) (Mus musculus (Mouse)).